Here is a 73-residue protein sequence, read N- to C-terminus: Putative membrane protein insertion efficiency factor (73 aa).

Belongs to the UPF0161 family.

The protein resides in the cell inner membrane. In terms of biological role, could be involved in insertion of integral membrane proteins into the membrane. The protein is Putative membrane protein insertion efficiency factor of Dinoroseobacter shibae (strain DSM 16493 / NCIMB 14021 / DFL 12).